We begin with the raw amino-acid sequence, 287 residues long: ATP synthase gamma chain (287 aa).

The protein belongs to the ATPase gamma chain family. F-type ATPases have 2 components, CF(1) - the catalytic core - and CF(0) - the membrane proton channel. CF(1) has five subunits: alpha(3), beta(3), gamma(1), delta(1), epsilon(1). CF(0) has three main subunits: a, b and c.

It localises to the cell inner membrane. Functionally, produces ATP from ADP in the presence of a proton gradient across the membrane. The gamma chain is believed to be important in regulating ATPase activity and the flow of protons through the CF(0) complex. This Xanthomonas axonopodis pv. citri (strain 306) protein is ATP synthase gamma chain.